We begin with the raw amino-acid sequence, 261 residues long: UPF0246 protein azo1887 (261 aa).

It belongs to the UPF0246 family.

The sequence is that of UPF0246 protein azo1887 from Azoarcus sp. (strain BH72).